Consider the following 371-residue polypeptide: Cyanide hydratase (371 aa).

A CN hydrolase domain is found at 8 to 286; the sequence is YKAAAVQAEP…EGLMFVEIDL (279 aa). Residue E48 is the Proton acceptor of the active site. K130 is a catalytic residue. The active-site Nucleophile is C165. Residues 326 to 356 are disordered; the sequence is DGGIGTYNTQDRVGLNRPLDAPKVDGPSGVS.

It belongs to the carbon-nitrogen hydrolase superfamily. Nitrilase family. As to quaternary structure, oligomer of dimers, forming left-handed helical fibers.

The enzyme catalyses formamide = hydrogen cyanide + H2O. Functionally, catalyzes the hydration of cyanide to formamide. Degradation of cyanide may be important for plant pathogenic fungi in infection of cyanogenic plants. Can also transform some nitriles like 2-cyanopyridine and fumaronitrile and has a minor activity with 4-cyanophenyl acetonitrile (4-CPA). This chain is Cyanide hydratase, found in Botryotinia fuckeliana (strain T4) (Noble rot fungus).